The primary structure comprises 110 residues: UPF0122 protein BcerKBAB4_3669 (110 aa).

Belongs to the UPF0122 family.

Might take part in the signal recognition particle (SRP) pathway. This is inferred from the conservation of its genetic proximity to ftsY/ffh. May be a regulatory protein. This chain is UPF0122 protein BcerKBAB4_3669, found in Bacillus mycoides (strain KBAB4) (Bacillus weihenstephanensis).